The chain runs to 346 residues: UPF0324 membrane protein FN0533 (346 aa).

Helical transmembrane passes span 5–22 (LYGI…WKLG), 27–49 (LVGG…KNRA), 62–81 (VLQY…TIIS), 86–108 (SLPI…AKLI), 115–137 (VILI…APVI), 147–169 (AISV…GDIL), 216–233 (LTRT…AVYN), 248–270 (IFPM…NYFI), 283–305 (INNV…MVAI), and 315–337 (ILSG…LVSI).

Belongs to the UPF0324 family.

The protein localises to the cell membrane. This Fusobacterium nucleatum subsp. nucleatum (strain ATCC 25586 / DSM 15643 / BCRC 10681 / CIP 101130 / JCM 8532 / KCTC 2640 / LMG 13131 / VPI 4355) protein is UPF0324 membrane protein FN0533.